A 364-amino-acid chain; its full sequence is Dual-specificity RNA methyltransferase RlmN (364 aa).

Glu93 acts as the Proton acceptor in catalysis. A Radical SAM core domain is found at 99–337 (EDDRGTLCIS…ATIRKTRGDD (239 aa)). Cys106 and Cys342 are oxidised to a cystine. The [4Fe-4S] cluster site is built by Cys113, Cys117, and Cys120. Residues 167-168 (GE), Ser199, 221-223 (SLH), and Asn299 each bind S-adenosyl-L-methionine. Cys342 functions as the S-methylcysteine intermediate in the catalytic mechanism.

It belongs to the radical SAM superfamily. RlmN family. [4Fe-4S] cluster serves as cofactor.

The protein resides in the cytoplasm. The catalysed reaction is adenosine(2503) in 23S rRNA + 2 reduced [2Fe-2S]-[ferredoxin] + 2 S-adenosyl-L-methionine = 2-methyladenosine(2503) in 23S rRNA + 5'-deoxyadenosine + L-methionine + 2 oxidized [2Fe-2S]-[ferredoxin] + S-adenosyl-L-homocysteine. The enzyme catalyses adenosine(37) in tRNA + 2 reduced [2Fe-2S]-[ferredoxin] + 2 S-adenosyl-L-methionine = 2-methyladenosine(37) in tRNA + 5'-deoxyadenosine + L-methionine + 2 oxidized [2Fe-2S]-[ferredoxin] + S-adenosyl-L-homocysteine. In terms of biological role, specifically methylates position 2 of adenine 2503 in 23S rRNA and position 2 of adenine 37 in tRNAs. m2A2503 modification seems to play a crucial role in the proofreading step occurring at the peptidyl transferase center and thus would serve to optimize ribosomal fidelity. The sequence is that of Dual-specificity RNA methyltransferase RlmN from Dichelobacter nodosus (strain VCS1703A).